Consider the following 554-residue polypeptide: 4-coumarate--CoA ligase 3 (554 aa).

Ser188, Ser189, Gly190, Thr191, Thr192, and Lys196 together coordinate ATP. The (E)-4-coumaroyl-AMP site is built by Tyr238 and Ser242. Lys259 contributes to the CoA binding site. Positions 261–330 are SBD1; it reads DLGALVDLVR…AKIPNAVLGQ (70 aa). Residues Ala308, Gln330, Gly331, Thr335, and Met343 each coordinate (E)-4-coumaroyl-AMP. The ATP site is built by Gln330, Gly331, and Thr335. The tract at residues 331–398 is SBD2; that stretch reads GYGMTEAGPV…IRGEQIMKGY (68 aa). Asp419 and Arg434 together coordinate ATP. (E)-4-coumaroyl-AMP-binding residues include Lys436 and Lys440. Lys442 and Gly443 together coordinate CoA. Lys525 contributes to the ATP binding site.

Belongs to the ATP-dependent AMP-binding enzyme family. It depends on Mg(2+) as a cofactor. As to expression, expressed in root exodermis and epidermis cells, stem vascular cells, leaf developing vascular bundle cells and parenchyma cells, lemma, palea, stamens and pistil.

The catalysed reaction is (E)-ferulate + ATP + CoA = (E)-feruloyl-CoA + AMP + diphosphate. The enzyme catalyses (E)-4-coumarate + ATP + CoA = (E)-4-coumaroyl-CoA + AMP + diphosphate. It catalyses the reaction (E)-caffeate + ATP + CoA = (E)-caffeoyl-CoA + AMP + diphosphate. It carries out the reaction (E)-cinnamate + ATP + CoA = (E)-cinnamoyl-CoA + AMP + diphosphate. The catalysed reaction is (E)-ferulate + ATP + H(+) = (E)-feruloyl-AMP + diphosphate. The enzyme catalyses (E)-feruloyl-AMP + CoA = (E)-feruloyl-CoA + AMP + H(+). It catalyses the reaction (E)-4-coumarate + ATP + H(+) = (E)-4-coumaroyl-AMP + diphosphate. It carries out the reaction (E)-4-coumaroyl-AMP + CoA = (E)-4-coumaroyl-CoA + AMP + H(+). The catalysed reaction is (E)-caffeate + ATP + H(+) = (E)-caffeoyl-AMP + diphosphate. The enzyme catalyses (E)-caffeoyl-AMP + CoA = (E)-caffeoyl-CoA + AMP + H(+). It functions in the pathway phytoalexin biosynthesis; 3,4',5-trihydroxystilbene biosynthesis; 3,4',5-trihydroxystilbene from trans-4-coumarate: step 1/2. Its function is as follows. Involved in the phenylpropanoid metabolism by mediating the activation of a number of hydroxycinnamates for the biosynthesis of monolignols and other phenolic secondary metabolites. Catalyzes the formation of CoA esters of cinnamate, 4-coumarate, caffeate and ferulate. Is more efficient with substrates in the following order: ferulate &gt; 4-coumarate &gt; caffeate &gt; cinnamate. Possesses very high activity compared to 4CL1, 4CL2, 4CL4 and 4CL5. Cannot convert sinapate to its corresponding CoA ester. May play a role in the synthesis of lignin as well as other phenolic compounds. Follows a two-step reaction mechanism, wherein the carboxylate substrate first undergoes adenylation by ATP, followed by a thioesterification in the presence of CoA to yield the final CoA thioester. This chain is 4-coumarate--CoA ligase 3, found in Oryza sativa subsp. japonica (Rice).